A 447-amino-acid polypeptide reads, in one-letter code: 3-phosphoshikimate 1-carboxyvinyltransferase (447 aa).

3-phosphoshikimate contacts are provided by lysine 25, serine 26, and arginine 30. Lysine 25 serves as a coordination point for phosphoenolpyruvate. Residues glycine 96 and arginine 124 each coordinate phosphoenolpyruvate. The 3-phosphoshikimate site is built by serine 171, serine 172, glutamine 173, serine 203, aspartate 325, and lysine 352. Glutamine 173 contacts phosphoenolpyruvate. The active-site Proton acceptor is aspartate 325. Residues arginine 356, arginine 400, and lysine 425 each coordinate phosphoenolpyruvate.

It belongs to the EPSP synthase family. As to quaternary structure, monomer.

Its subcellular location is the cytoplasm. The catalysed reaction is 3-phosphoshikimate + phosphoenolpyruvate = 5-O-(1-carboxyvinyl)-3-phosphoshikimate + phosphate. Its pathway is metabolic intermediate biosynthesis; chorismate biosynthesis; chorismate from D-erythrose 4-phosphate and phosphoenolpyruvate: step 6/7. In terms of biological role, catalyzes the transfer of the enolpyruvyl moiety of phosphoenolpyruvate (PEP) to the 5-hydroxyl of shikimate-3-phosphate (S3P) to produce enolpyruvyl shikimate-3-phosphate and inorganic phosphate. This is 3-phosphoshikimate 1-carboxyvinyltransferase from Bordetella petrii (strain ATCC BAA-461 / DSM 12804 / CCUG 43448).